We begin with the raw amino-acid sequence, 257 residues long: Imidazole glycerol phosphate synthase subunit HisF (257 aa).

Active-site residues include D11 and D130.

It belongs to the HisA/HisF family. Heterodimer of HisH and HisF.

Its subcellular location is the cytoplasm. It catalyses the reaction 5-[(5-phospho-1-deoxy-D-ribulos-1-ylimino)methylamino]-1-(5-phospho-beta-D-ribosyl)imidazole-4-carboxamide + L-glutamine = D-erythro-1-(imidazol-4-yl)glycerol 3-phosphate + 5-amino-1-(5-phospho-beta-D-ribosyl)imidazole-4-carboxamide + L-glutamate + H(+). The protein operates within amino-acid biosynthesis; L-histidine biosynthesis; L-histidine from 5-phospho-alpha-D-ribose 1-diphosphate: step 5/9. IGPS catalyzes the conversion of PRFAR and glutamine to IGP, AICAR and glutamate. The HisF subunit catalyzes the cyclization activity that produces IGP and AICAR from PRFAR using the ammonia provided by the HisH subunit. The polypeptide is Imidazole glycerol phosphate synthase subunit HisF (Photobacterium profundum (strain SS9)).